A 555-amino-acid polypeptide reads, in one-letter code: Formate--tetrahydrofolate ligase (555 aa).

65-72 (TPAGEGKT) contacts ATP.

It belongs to the formate--tetrahydrofolate ligase family.

The enzyme catalyses (6S)-5,6,7,8-tetrahydrofolate + formate + ATP = (6R)-10-formyltetrahydrofolate + ADP + phosphate. The protein operates within one-carbon metabolism; tetrahydrofolate interconversion. The sequence is that of Formate--tetrahydrofolate ligase from Paracoccus denitrificans (strain Pd 1222).